Consider the following 260-residue polypeptide: Thymidylate synthase (260 aa).

The protein operates within pyrimidine metabolism; dTTP biosynthesis. In terms of biological role, is able to catalyze the biosynthesis of dTMP using dUMP, tetrahydrofolate and formaldehyde in vitro, i.e. a reaction equivalent to that catalyzed by bacterial thymidylate synthases (EC 2.1.1.45). However, M.jannaschii like most methanogenic Archaea lacks folates, thus the physiological cosubstrate is unknown but is likely one of the non-methylated methanopterin biosynthetic intermediates. This is Thymidylate synthase from Methanocaldococcus jannaschii (strain ATCC 43067 / DSM 2661 / JAL-1 / JCM 10045 / NBRC 100440) (Methanococcus jannaschii).